The chain runs to 251 residues: Tritrans,polycis-undecaprenyl-diphosphate synthase (geranylgeranyl-diphosphate specific) (251 aa).

Residue D29 is part of the active site. D29 is a binding site for Mg(2+). Residues 30–33, F34, H46, and 74–76 each bind substrate; these read GNRR and STE. Residue N77 is the Proton acceptor of the active site. Residues F78, R80, R200, and 206-208 each bind substrate; that span reads RLS.

The protein belongs to the UPP synthase family. As to quaternary structure, homodimer. It depends on Mg(2+) as a cofactor.

The enzyme catalyses geranylgeranyl diphosphate + 7 isopentenyl diphosphate = tri-trans,hepta-cis-undecaprenyl diphosphate + 7 diphosphate. Its function is as follows. Catalyzes the sequential condensation of isopentenyl diphosphate (IPP) with geranylgeranyl diphosphate (GGPP) to yield (2Z,6Z,10Z,14Z,18Z,22Z,26Z,30E,34E,38E)-undecaprenyl diphosphate (tritrans,heptacis-UPP). It is probably the precursor of glycosyl carrier lipids. The polypeptide is Tritrans,polycis-undecaprenyl-diphosphate synthase (geranylgeranyl-diphosphate specific) (Archaeoglobus fulgidus (strain ATCC 49558 / DSM 4304 / JCM 9628 / NBRC 100126 / VC-16)).